The sequence spans 63 residues: Chromatin protein Cren7 (63 aa).

It belongs to the Cren7 family. Monomer. Methylated at multiple sites, to varying extents.

The protein localises to the chromosome. Its subcellular location is the cytoplasm. In terms of biological role, a chromatin protein, binds double-stranded DNA without sequence specificity. Constrains negative DNA supercoils. The sequence is that of Chromatin protein Cren7 from Pyrobaculum calidifontis (strain DSM 21063 / JCM 11548 / VA1).